The following is a 236-amino-acid chain: tRNA (guanine-N(1)-)-methyltransferase (236 aa).

S-adenosyl-L-methionine-binding positions include Gly116 and 136-141 (LGDFVL).

The protein belongs to the RNA methyltransferase TrmD family. As to quaternary structure, homodimer.

The protein localises to the cytoplasm. The enzyme catalyses guanosine(37) in tRNA + S-adenosyl-L-methionine = N(1)-methylguanosine(37) in tRNA + S-adenosyl-L-homocysteine + H(+). In terms of biological role, specifically methylates guanosine-37 in various tRNAs. The polypeptide is tRNA (guanine-N(1)-)-methyltransferase (Thiobacillus denitrificans (strain ATCC 25259 / T1)).